The chain runs to 180 residues: ATP synthase subunit delta (180 aa).

This sequence belongs to the ATPase delta chain family. F-type ATPases have 2 components, F(1) - the catalytic core - and F(0) - the membrane proton channel. F(1) has five subunits: alpha(3), beta(3), gamma(1), delta(1), epsilon(1). F(0) has three main subunits: a(1), b(2) and c(10-14). The alpha and beta chains form an alternating ring which encloses part of the gamma chain. F(1) is attached to F(0) by a central stalk formed by the gamma and epsilon chains, while a peripheral stalk is formed by the delta and b chains.

The protein resides in the cell membrane. Functionally, f(1)F(0) ATP synthase produces ATP from ADP in the presence of a proton or sodium gradient. F-type ATPases consist of two structural domains, F(1) containing the extramembraneous catalytic core and F(0) containing the membrane proton channel, linked together by a central stalk and a peripheral stalk. During catalysis, ATP synthesis in the catalytic domain of F(1) is coupled via a rotary mechanism of the central stalk subunits to proton translocation. This protein is part of the stalk that links CF(0) to CF(1). It either transmits conformational changes from CF(0) to CF(1) or is implicated in proton conduction. The polypeptide is ATP synthase subunit delta (Lactobacillus delbrueckii subsp. bulgaricus (strain ATCC 11842 / DSM 20081 / BCRC 10696 / JCM 1002 / NBRC 13953 / NCIMB 11778 / NCTC 12712 / WDCM 00102 / Lb 14)).